The sequence spans 371 residues: Beta-1,3-galactosyltransferase 4 (371 aa).

Topologically, residues 1–4 (MPLS) are cytoplasmic. The chain crosses the membrane as a helical; Signal-anchor for type II membrane protein span at residues 5–25 (LFRRVLLAVLLLVIIWTLFGP). The Lumenal segment spans residues 26 to 371 (SGLGEELLSL…RCRFIAWFSS (346 aa)). A glycan (N-linked (GlcNAc...) asparagine) is linked at Asn-143.

This sequence belongs to the glycosyltransferase 31 family. As to expression, expressed in heart, brain, spleen, kidney, lung and testis.

The protein resides in the golgi apparatus membrane. It carries out the reaction a ganglioside GM2 (d18:1(4E)) + UDP-alpha-D-galactose = a ganglioside GM1 (d18:1(4E)) + UDP + H(+). The enzyme catalyses a ganglioside GM2 + UDP-alpha-D-galactose = a ganglioside GM1 + UDP + H(+). The catalysed reaction is a ganglioside GD2 (d18:1(4E)) + UDP-alpha-D-galactose = a ganglioside GD1b (d18:1(4E)) + UDP + H(+). It catalyses the reaction a ganglioside GA2 (d18:1(4E)) + UDP-alpha-D-galactose = a ganglioside GA1 (d18:1(4E)) + UDP + H(+). It participates in protein modification; protein glycosylation. Its function is as follows. Involved in GM1/GD1B/GA1 ganglioside biosynthesis. This Mus musculus (Mouse) protein is Beta-1,3-galactosyltransferase 4.